We begin with the raw amino-acid sequence, 245 residues long: 1-(5-phosphoribosyl)-5-[(5-phosphoribosylamino)methylideneamino] imidazole-4-carboxamide isomerase (245 aa).

Asp-7 functions as the Proton acceptor in the catalytic mechanism. Asp-129 serves as the catalytic Proton donor.

It belongs to the HisA/HisF family.

The protein localises to the cytoplasm. The enzyme catalyses 1-(5-phospho-beta-D-ribosyl)-5-[(5-phospho-beta-D-ribosylamino)methylideneamino]imidazole-4-carboxamide = 5-[(5-phospho-1-deoxy-D-ribulos-1-ylimino)methylamino]-1-(5-phospho-beta-D-ribosyl)imidazole-4-carboxamide. It functions in the pathway amino-acid biosynthesis; L-histidine biosynthesis; L-histidine from 5-phospho-alpha-D-ribose 1-diphosphate: step 4/9. In Enterobacter sp. (strain 638), this protein is 1-(5-phosphoribosyl)-5-[(5-phosphoribosylamino)methylideneamino] imidazole-4-carboxamide isomerase.